Here is a 90-residue protein sequence, read N- to C-terminus: Small ribosomal subunit protein mS37 (90 aa).

The cysteines at positions 27 and 58 are disulfide-linked.

It belongs to the mitochondrion-specific ribosomal protein mS37 family. In terms of assembly, component of the mitochondrial small ribosomal subunit (mt-SSU). Mature N.crassa 74S mitochondrial ribosomes consist of a small (37S) and a large (54S) subunit. The 37S small subunit contains a 16S ribosomal RNA (16S mt-rRNA) and 32 different proteins. The 54S large subunit contains a 23S rRNA (23S mt-rRNA) and 42 different proteins.

Its subcellular location is the mitochondrion. In terms of biological role, component of the mitochondrial ribosome (mitoribosome), a dedicated translation machinery responsible for the synthesis of mitochondrial genome-encoded proteins, including at least some of the essential transmembrane subunits of the mitochondrial respiratory chain. The mitoribosomes are attached to the mitochondrial inner membrane and translation products are cotranslationally integrated into the membrane. The chain is Small ribosomal subunit protein mS37 (mrp10) from Neurospora crassa (strain ATCC 24698 / 74-OR23-1A / CBS 708.71 / DSM 1257 / FGSC 987).